We begin with the raw amino-acid sequence, 477 residues long: Aspartyl/glutamyl-tRNA(Asn/Gln) amidotransferase subunit B (477 aa).

Belongs to the GatB/GatE family. GatB subfamily. In terms of assembly, heterotrimer of A, B and C subunits.

The enzyme catalyses L-glutamyl-tRNA(Gln) + L-glutamine + ATP + H2O = L-glutaminyl-tRNA(Gln) + L-glutamate + ADP + phosphate + H(+). It carries out the reaction L-aspartyl-tRNA(Asn) + L-glutamine + ATP + H2O = L-asparaginyl-tRNA(Asn) + L-glutamate + ADP + phosphate + 2 H(+). Functionally, allows the formation of correctly charged Asn-tRNA(Asn) or Gln-tRNA(Gln) through the transamidation of misacylated Asp-tRNA(Asn) or Glu-tRNA(Gln) in organisms which lack either or both of asparaginyl-tRNA or glutaminyl-tRNA synthetases. The reaction takes place in the presence of glutamine and ATP through an activated phospho-Asp-tRNA(Asn) or phospho-Glu-tRNA(Gln). In Lactococcus lactis subsp. cremoris (strain MG1363), this protein is Aspartyl/glutamyl-tRNA(Asn/Gln) amidotransferase subunit B.